The following is a 382-amino-acid chain: MAQYSLFTSESVSEGHPDKMADQISDAILDAILADDKNARVAVETMVKTGMAIVAGEVRTSTYIDLEDLIRDVILDIGYNSSDVGFDGASCAVLNAIGKQSADIAMGVDEANNKDLGAGDQGLMFGYATNETDVLMPAPIYYSHRLVEKQAELRKNGKLNWLRPDAKSQVTLRYDNGKPVAVDAVVLSTQHNPDVSQATIREAVMEEIIKTTLPAEWLHADTKYHINPTGQFIIGGPVGDCGLTGRKIIVDTYGGMARHGGGAFSGKDPSKVDRSAAYAGRYVAKNIVAAGLASRCEIQVSYAIGVAEPTSISVNTFGTGSIADSEISKLVAQHFDLRPRGIIEMLDLLRPIYRKTAAYGHFGREEPEFTWEKTDKVAALQG.

ATP is bound at residue histidine 16. Aspartate 18 is a Mg(2+) binding site. Glutamate 44 lines the K(+) pocket. The L-methionine site is built by glutamate 57 and glutamine 100. The interval 100-110 (QSADIAMGVDE) is flexible loop. ATP is bound by residues 165–167 (DAK), aspartate 240, 246–247 (RK), alanine 263, and lysine 267. Aspartate 240 is an L-methionine binding site. An L-methionine-binding site is contributed by lysine 271.

It belongs to the AdoMet synthase family. In terms of assembly, homotetramer; dimer of dimers. Mg(2+) is required as a cofactor. It depends on K(+) as a cofactor.

The protein localises to the cytoplasm. The catalysed reaction is L-methionine + ATP + H2O = S-adenosyl-L-methionine + phosphate + diphosphate. Its pathway is amino-acid biosynthesis; S-adenosyl-L-methionine biosynthesis; S-adenosyl-L-methionine from L-methionine: step 1/1. In terms of biological role, catalyzes the formation of S-adenosylmethionine (AdoMet) from methionine and ATP. The overall synthetic reaction is composed of two sequential steps, AdoMet formation and the subsequent tripolyphosphate hydrolysis which occurs prior to release of AdoMet from the enzyme. This is S-adenosylmethionine synthase from Saccharophagus degradans (strain 2-40 / ATCC 43961 / DSM 17024).